The following is a 1138-amino-acid chain: Envelopment polyprotein (1138 aa).

Residues 1 to 18 (MEGWYLVVLGVCYTLTLA) form the signal peptide. The Lumenal segment spans residues 19-487 (MPKTIYELKM…CVPGLHGWAT (469 aa)). Cystine bridges form between Cys30-Cys155, Cys64-Cys161, Cys113-Cys132, Cys137-Cys142, Cys179-Cys189, Cys214-Cys250, Cys239-Cys354, Cys379-Cys438, Cys383-Cys392, Cys408-Cys427, and Cys455-Cys478. N-linked (GlcNAc...) asparagine; by host glycosylation occurs at Asn138. Asn350 carries an N-linked (GlcNAc...) asparagine; by host glycan. Asn402 carries an N-linked (GlcNAc...) asparagine; by host glycan. A helical transmembrane segment spans residues 488 to 508 (VMLLSTFCFGWVLIPAVTLII). Residues 509–630 (LKCLRVLTFS…LGVFRYKSRC (122 aa)) lie on the Cytoplasmic side of the membrane. The interval 519–536 (CSHYTNESKFKFILEKVK) is binding to the ribonucleoprotein. 2 consecutive CCHC-type zinc fingers follow at residues 548–568 (CDVCHHECETAKELESHRQSC) and 573–594 (CPYCMTITEATESALQAHYSIC). Binding to the ribonucleoprotein stretches follow at residues 591 to 608 (YSICKLTGRFQEALKKSL), 595 to 606 (KLTGRFQEALKK), and 614 to 628 (KKGCYRTLGVFRYKS). An interaction with host TRAF3 region spans residues 610 to 637 (KPEVKKGCYRTLGVFRYKSRCYVGLVWC). Residues 614–637 (KKGCYRTLGVFRYKSRCYVGLVWC) enclose the ITAM domain. Residues Tyr618 and Tyr631 each carry the phosphotyrosine modification. The YxxL motif lies at 618–621 (YRTL). A helical transmembrane segment spans residues 631-651 (YVGLVWCLLLTCEIVIWAASA). The Lumenal segment spans residues 652–1107 (ETPLMESGWS…EWLLGILNGN (456 aa)). 8 disulfide bridges follow: Cys738–Cys773, Cys742–Cys780, Cys754–Cys887, Cys768–Cys898, Cys783–Cys906, Cys809–Cys818, Cys826–Cys835, and Cys866–Cys870. The segment at 760–780 (YQYETGWGCNPGDCPGVGTGC) is fusion loop. An N-linked (GlcNAc...) asparagine; by host glycan is attached at Asn930. 5 disulfide bridges follow: Cys972–Cys1002, Cys995–Cys1047, Cys1012–Cys1017, Cys1048–Cys1053, and Cys1087–Cys1091. Residues 1108-1128 (WIVVVVLVVILILSIIMFSVL) traverse the membrane as a helical segment. The binding to the ribonucleoprotein stretch occupies residues 1124–1138 (MFSVLCPRRGHKKTV). Residues 1129–1138 (CPRRGHKKTV) are Cytoplasmic-facing.

This sequence belongs to the hantavirus envelope glycoprotein family. As to quaternary structure, homodimer. Homotetramer; forms heterotetrameric Gn-Gc spikes in the pre-fusion conformation. Interacts (via C-terminus) with the nucleoprotein. Interacts with host TUFM; this interaction contributes to the virus-induced degradation of mitochondria by autophagy, which leads to degradation of host MAVS and inhibition of type I interferon (IFN) responses. Interacts with host MAP1LC3B; this interaction contributes to the virus-induced degradation of mitochondria by autophagy, which leads to degradation of host MAVS and inhibition of type I interferon (IFN) responses. Interacts (via C-terminus) with host TRAF3; this interaction inhibits the formation of TRAF3-TBK1 complexes. Homodimer. Homotetramer; forms heterotetrameric Gn-Gc spikes in the pre-fusion conformation. Homotrimer; forms homotrimer in the post-fusion conformation at acidic pH. Interacts (via C-terminus) with the nucleoprotein. Post-translationally, envelope polyprotein precursor is quickly cleaved in vivo just after synthesis, presumably by host signal peptidase.

Its subcellular location is the virion membrane. The protein localises to the host cell surface. It localises to the host Golgi apparatus membrane. The protein resides in the host endoplasmic reticulum membrane. It is found in the host mitochondrion. Its function is as follows. Forms homotetramers with glycoprotein C at the surface of the virion. Attaches the virion to host cell receptors including integrin ITGAV/ITGB3. This attachment induces virion internalization possibly through clathrin-dependent endocytosis and dynamin-independent macropinocytosis. Mediates the assembly and budding of infectious virus particles through its interaction with the nucleocapsid protein and the viral genome. May dysregulate normal immune and endothelial cell responses through an ITAM motif. Translocates to mitochondria, binds to host TUFM and recruits MAP1LC3B. These interactions induce mitochondrial autophagy and therefore destruction of host MAVS leading to inhibition of type I interferon (IFN) responses. Concomitant breakdown of glycoprotein N is apparently prevented by the nucleoprotein that may inhibit Gn-stimulated autophagosome-lysosome fusion. Interacts with the viral genomic RNA. Inhibits the host RIG-I/TBK1 pathway by disrupting the formation of TBK1-TRAF3 complexes and downstream signaling responses required for IFN-beta transcription. Forms homotetramers with glycoprotein N at the surface of the virion. Attaches the virion to host cell receptors including integrin ITGAV/ITGB3. This attachment induces virion internalization predominantly through clathrin-dependent endocytosis. Class II fusion protein that promotes fusion of viral membrane with host endosomal membrane after endocytosis of the virion. This is Envelopment polyprotein (GP) from Abrothrix longipilis (Long-haired grass mouse).